A 450-amino-acid chain; its full sequence is Ribosomal protein uS12 methylthiotransferase RimO (450 aa).

The 111-residue stretch at P16–P126 folds into the MTTase N-terminal domain. [4Fe-4S] cluster-binding residues include C25, C61, C90, C157, C161, and C164. In terms of domain architecture, Radical SAM core spans L143–R380. The TRAM domain maps to K383 to G449.

Belongs to the methylthiotransferase family. RimO subfamily. Requires [4Fe-4S] cluster as cofactor.

It is found in the cytoplasm. It catalyses the reaction L-aspartate(89)-[ribosomal protein uS12]-hydrogen + (sulfur carrier)-SH + AH2 + 2 S-adenosyl-L-methionine = 3-methylsulfanyl-L-aspartate(89)-[ribosomal protein uS12]-hydrogen + (sulfur carrier)-H + 5'-deoxyadenosine + L-methionine + A + S-adenosyl-L-homocysteine + 2 H(+). Catalyzes the methylthiolation of an aspartic acid residue of ribosomal protein uS12. The polypeptide is Ribosomal protein uS12 methylthiotransferase RimO (Azorhizobium caulinodans (strain ATCC 43989 / DSM 5975 / JCM 20966 / LMG 6465 / NBRC 14845 / NCIMB 13405 / ORS 571)).